Reading from the N-terminus, the 786-residue chain is Leucine-rich repeat extensin-like protein 2 (786 aa).

A signal peptide spans 1–28 (MLLFPSTSLRLFFFLFLLFSSCFLQIRG). Asparagine 73 and asparagine 79 each carry an N-linked (GlcNAc...) asparagine glycan. 9 LRR repeats span residues 100-124 (TRVV…LGLL), 125-147 (TDLA…TFKH), 149-172 (KLLF…VLSL), 173-196 (PSLK…LFDK), 198-219 (LDAI…MGNS), 221-243 (VSAL…GLMG), 244-267 (KTLN…IGNL), 268-291 (KNVT…IGNM), and 292-315 (KSLE…ICQL). Residues asparagine 255 and asparagine 269 are each glycosylated (N-linked (GlcNAc...) asparagine). Asparagine 320 and asparagine 346 each carry an N-linked (GlcNAc...) asparagine glycan. 4 disordered regions span residues 352–372 (IDGK…SRSV), 390–589 (FKMS…YYAV), 624–645 (PPVY…YYPP), and 694–786 (PPPS…IPYY). Residues 353 to 362 (DGKEDQRSSK) show a composition bias toward basic and acidic residues. A contains the Ser-Pro(4) repeats region spans residues 384–786 (SPPPPSFKMS…SPPPPSIPYY (403 aa)). 3 stretches are compositionally biased toward pro residues: residues 460–477 (YPPP…PPPS), 487–542 (YPPP…PPPK), and 566–589 (SPPP…YYAV). Pro residues-rich tracts occupy residues 694 to 713 (PPPS…PPST), 720 to 737 (PASP…PPPK), 752 to 769 (PTPP…PLPP), and 777 to 786 (SPPPPSIPYY).

Post-translationally, hydroxylated on proline residues in the S-P-P-P-P repeat. In terms of processing, O-glycosylated on hydroxyprolines. In terms of tissue distribution, mostly expressed in roots, also present in stems at low levels. In roots, confined to differentiation zones, the collet, and meristematic cells of tips.

The protein resides in the secreted. Its subcellular location is the cell wall. In terms of biological role, modulates cell morphogenesis by regulating cell wall formation and assembly, and/or growth polarization. Together with LRX2, component of the extracellular mechanism regulating root hair morphogenesis and elongation. In Arabidopsis thaliana (Mouse-ear cress), this protein is Leucine-rich repeat extensin-like protein 2 (LRX2).